A 115-amino-acid chain; its full sequence is Hydrogenase maturation factor HypA (115 aa).

His2 provides a ligand contact to Ni(2+). Positions 73, 76, 89, and 92 each coordinate Zn(2+).

It belongs to the HypA/HybF family.

Functionally, involved in the maturation of [NiFe] hydrogenases. Required for nickel insertion into the metal center of the hydrogenase. In Polaromonas naphthalenivorans (strain CJ2), this protein is Hydrogenase maturation factor HypA.